Consider the following 307-residue polypeptide: Metapyrocatechase (307 aa).

2 VOC domains span residues 7–122 (RPGH…LYAD) and 150–269 (RFDH…VFCG). The Fe cation site is built by His-153, His-214, and Glu-265.

Belongs to the extradiol ring-cleavage dioxygenase family. Homotetramer. Requires Fe(2+) as cofactor.

The enzyme catalyses catechol + O2 = (2Z,4E)-2-hydroxy-6-oxohexa-2,4-dienoate + H(+). It participates in xenobiotic degradation; toluene degradation. The polypeptide is Metapyrocatechase (xylE) (Pseudomonas putida (Arthrobacter siderocapsulatus)).